The chain runs to 267 residues: MAVISMKQLLEAGVHFGHQTRRWNPKMKQYIFTERNGIYIIDLQKTVKLIDAAYNYMKDEAAKGAVVLFVGTKKQAQDSIEEEATRAGQYYVNHRWLGGTLTNWETIQTRIKRLKSLKKMATDGTFDVLPKKEVSLLKKSQDKLERFLGGIEDMPKLPDVMFIVDPRKEQIAVHEAQKLNIPIVAMVDTNTDPDEIDVVIPSNDDAIRAVRLITSKMADAIVEGRQGEDQVDEKTFEGQKSEAAEGDKKTADNSMEDIVNAVEGDNK.

The segment at 224 to 267 is disordered; that stretch reads GRQGEDQVDEKTFEGQKSEAAEGDKKTADNSMEDIVNAVEGDNK. Residues 225 to 251 show a composition bias toward basic and acidic residues; the sequence is RQGEDQVDEKTFEGQKSEAAEGDKKTA.

It belongs to the universal ribosomal protein uS2 family.

The polypeptide is Small ribosomal subunit protein uS2 (Levilactobacillus brevis (strain ATCC 367 / BCRC 12310 / CIP 105137 / JCM 1170 / LMG 11437 / NCIMB 947 / NCTC 947) (Lactobacillus brevis)).